The sequence spans 470 residues: 63 kDa sperm flagellar membrane protein (470 aa).

Residues Met1–Ala25 form the signal peptide. One can recognise an EGF-like 1 domain in the interval Pro41–Thr80. Disulfide bonds link Cys45–Cys57, Cys50–Cys66, and Cys68–Cys79. N-linked (GlcNAc...) asparagine glycosylation is found at Asn78, Asn170, and Asn219. The SEA domain occupies Val81–Glu205. The EGF-like 2; calcium-binding domain maps to Asp202–Ile250. 6 cysteine pairs are disulfide-bonded: Cys206–Cys220, Cys214–Cys229, Cys231–Cys249, Cys253–Cys265, Cys258–Cys277, and Cys279–Cys291. Residues Cys249–Asp292 form the EGF-like 3 domain. A glycan (N-linked (GlcNAc...) asparagine) is linked at Asn322. Gly446 carries GPI-anchor amidated glycine lipidation. A propeptide spans Ser447–His470 (removed in mature form).

In terms of tissue distribution, sperm.

Its subcellular location is the cell projection. It is found in the cilium. The protein resides in the flagellum membrane. This chain is 63 kDa sperm flagellar membrane protein, found in Strongylocentrotus purpuratus (Purple sea urchin).